Here is a 2104-residue protein sequence, read N- to C-terminus: Protein Ycf2 (2104 aa).

Residue 1396-1403 (GPVETGRS) participates in ATP binding.

Belongs to the Ycf2 family.

The protein resides in the plastid. It is found in the chloroplast stroma. In terms of biological role, probable ATPase of unknown function. Its presence in a non-photosynthetic plant (Epifagus virginiana) and experiments in tobacco indicate that it has an essential function which is probably not related to photosynthesis. The sequence is that of Protein Ycf2 (ycf2-A) from Adiantum capillus-veneris (Maidenhair fern).